The sequence spans 513 residues: Acyltransferase uat1 (513 aa).

The active-site Proton acceptor is His158.

Belongs to the plant acyltransferase family.

Its pathway is secondary metabolite biosynthesis. Acyltransferase; part of the gene cluster that mediates the biosynthesis of the glycolipid biosurfactant ustilagic acid (UA). UA is a secreted cellobiose glycolipid that is toxic for many microorganisms and confers biocontrol activity to U.maydis. UA consists of 15,16-dihydroxypalmitic or 2,15,16-trihydroxypalmitic acid, which is O-glycosidically linked to cellobiose at its terminal hydroxyl group. In addition, the cellobiose moiety is acetylated and acylated with a short-chain hydroxy fatty acid. UA biosynthesis starts with omega-hydroxylation of palmitic acid catalyzed by the cytochrome P450 monooxygenase cyp1. Terminal hydroxylation of palmitic acid precedes subterminal hydroxylation catalyzed by the cytochrome P450 monooxygenase cyp2. Sequential glucosylation of the hydroxy fatty acid is probably catalyzed by the glycosyltransferase ugt1. The cellobiose lipid is further decorated by acetylation of the proximal glucose residue and by acylation with a short-chain beta-hydroxy fatty acid at the distal glucose residue. The acyltransferase uat1 may be a good candidate for catalyzing either acetylation or acylation of the cellobiose lipid. The fatty acid synthase fas2 may be involved in synthesis of the carbon backbone of the short-chain beta-hydroxy fatty acid esterified to the cellobiose disaccharide. The secreted UA consists of a mixture of both alpha-hydroxylated and non-hydroxylated glycolipids; therefore, alpha-hydroxylation of the long-chain fatty, catalyzed by the fatty acid hydroxylase ahd1, occurs late in UA biosynthesis and may be the last step before secretion. The polypeptide is Acyltransferase uat1 (Mycosarcoma maydis (Corn smut fungus)).